Consider the following 212-residue polypeptide: Thymidylate kinase (212 aa).

11 to 18 provides a ligand contact to ATP; sequence GLEGAGKT.

Belongs to the thymidylate kinase family.

It catalyses the reaction dTMP + ATP = dTDP + ADP. In terms of biological role, phosphorylation of dTMP to form dTDP in both de novo and salvage pathways of dTTP synthesis. This Buchnera aphidicola subsp. Acyrthosiphon pisum (strain APS) (Acyrthosiphon pisum symbiotic bacterium) protein is Thymidylate kinase (tmk).